Reading from the N-terminus, the 305-residue chain is UDP-3-O-acyl-N-acetylglucosamine deacetylase (305 aa).

Positions 78, 237, and 241 each coordinate Zn(2+). H264 serves as the catalytic Proton donor.

This sequence belongs to the LpxC family. The cofactor is Zn(2+).

The enzyme catalyses a UDP-3-O-[(3R)-3-hydroxyacyl]-N-acetyl-alpha-D-glucosamine + H2O = a UDP-3-O-[(3R)-3-hydroxyacyl]-alpha-D-glucosamine + acetate. It functions in the pathway glycolipid biosynthesis; lipid IV(A) biosynthesis; lipid IV(A) from (3R)-3-hydroxytetradecanoyl-[acyl-carrier-protein] and UDP-N-acetyl-alpha-D-glucosamine: step 2/6. Catalyzes the hydrolysis of UDP-3-O-myristoyl-N-acetylglucosamine to form UDP-3-O-myristoylglucosamine and acetate, the committed step in lipid A biosynthesis. The protein is UDP-3-O-acyl-N-acetylglucosamine deacetylase of Burkholderia multivorans (strain ATCC 17616 / 249).